The following is a 692-amino-acid chain: Proprotein convertase subtilisin/kexin type 9 (692 aa).

Residues 1–30 form the signal peptide; it reads MGTVSSRRSWWPLPLLLLLLLLLGPAGARA. Residues 31 to 152 constitute a propeptide that is removed on maturation; sequence QEDEDGDYEE…IEEDSSVFAQ (122 aa). Residue Y38 is modified to Sulfotyrosine. S47 is modified (phosphoserine). In terms of domain architecture, Inhibitor I9 spans 77–149; the sequence is TYVVVLKEET…VDYIEEDSSV (73 aa). The region spanning 155–461 is the Peptidase S8 domain; the sequence is PWNLERITPP…GWQLFCRTVW (307 aa). Residues D186 and H226 each act as charge relay system in the active site. 2 disulfide bridges follow: C223-C255 and C323-C358. S386 serves as the catalytic Charge relay system. Positions 450-692 are C-terminal domain; that stretch reads GAGWQLFCRT…HLAQASQELQ (243 aa). Cystine bridges form between C457/C527, C477/C526, and C486/C509. A glycan (N-linked (GlcNAc...) asparagine) is linked at N533. Cystine bridges form between C534–C601, C552–C600, C562–C588, C608–C679, C626–C678, and C635–C654. S688 carries the post-translational modification Phosphoserine.

The protein belongs to the peptidase S8 family. As to quaternary structure, monomer. Can self-associate to form dimers and higher multimers which may have increased LDLR degrading activity. The precursor protein but not the mature protein may form multimers. Interacts with APOB, VLDLR, LRP8/APOER2 and BACE1. The full-length immature form (pro-PCSK9) interacts with SCNN1A, SCNN1B and SCNN1G. The pro-PCSK9 form (via C-terminal domain) interacts with LDLR. Interacts (via the C-terminal domain) with ANXA2 (via repeat Annexin 1); the interaction inhibits the degradation of LDLR. Ca(2+) is required as a cofactor. Cleavage by furin and PCSK5 generates a truncated inactive protein that is unable to induce LDLR degradation. In terms of processing, undergoes autocatalytic cleavage in the endoplasmic reticulum to release the propeptide from the N-terminus and the cleavage of the propeptide is strictly required for its maturation and activation. The cleaved propeptide however remains associated with the catalytic domain through non-covalent interactions, preventing potential substrates from accessing its active site. As a result, it is secreted from cells as a propeptide-containing, enzymatically inactive protein. Post-translationally, phosphorylation protects the propeptide against proteolysis.

It localises to the cytoplasm. Its subcellular location is the secreted. It is found in the endosome. The protein localises to the lysosome. The protein resides in the cell surface. It localises to the endoplasmic reticulum. Its subcellular location is the golgi apparatus. With respect to regulation, its proteolytic activity is autoinhibited by the non-covalent binding of the propeptide to the catalytic domain. Inhibited by EGTA. Its function is as follows. Crucial player in the regulation of plasma cholesterol homeostasis. Binds to low-density lipid receptor family members: low density lipoprotein receptor (LDLR), very low density lipoprotein receptor (VLDLR), apolipoprotein E receptor (LRP1/APOER) and apolipoprotein receptor 2 (LRP8/APOER2), and promotes their degradation in intracellular acidic compartments. Acts via a non-proteolytic mechanism to enhance the degradation of the hepatic LDLR through a clathrin LDLRAP1/ARH-mediated pathway. May prevent the recycling of LDLR from endosomes to the cell surface or direct it to lysosomes for degradation. Can induce ubiquitination of LDLR leading to its subsequent degradation. Inhibits intracellular degradation of APOB via the autophagosome/lysosome pathway in a LDLR-independent manner. Involved in the disposal of non-acetylated intermediates of BACE1 in the early secretory pathway. Inhibits epithelial Na(+) channel (ENaC)-mediated Na(+) absorption by reducing ENaC surface expression primarily by increasing its proteasomal degradation. Regulates neuronal apoptosis via modulation of LRP8/APOER2 levels and related anti-apoptotic signaling pathways. The protein is Proprotein convertase subtilisin/kexin type 9 (PCSK9) of Pan troglodytes (Chimpanzee).